A 1378-amino-acid chain; its full sequence is Attractin-like protein 1 (1378 aa).

Positions 1–51 (MEPGVRARSGAPQPASPVLWRARPAGGGGASSWLLLDGNSWLLCYGFLYLA) are cleaved as a signal peptide. One can recognise an EGF-like 1 domain in the interval 52-90 (LYAQVSQSKPCERTGSCFSGRCVNSTCLCDPGWVGDQCQ). Residues 52-1229 (LYAQVSQSKP…FSQHNTIMDL (1178 aa)) lie on the Extracellular side of the membrane. 3 disulfide bridges follow: cysteine 62-cysteine 78, cysteine 80-cysteine 89, and cysteine 92-cysteine 118. A glycan (N-linked (GlcNAc...) asparagine) is linked at asparagine 75. Residues 92-208 (CQGRFKLTEP…TGFNIFYSIN (117 aa)) enclose the CUB domain. Residues asparagine 173 and asparagine 197 are each glycosylated (N-linked (GlcNAc...) asparagine). The EGF-like 2 domain occupies 206 to 244 (SINSCPNNCSGHGKCTTSVSVASQVYCECDKYWKGEACD). 3 disulfide bridges follow: cysteine 210-cysteine 220, cysteine 214-cysteine 232, and cysteine 234-cysteine 243. Kelch repeat units follow at residues 315-364 (FMWV…LYQE), 366-414 (IFMY…EGHS), 426-474 (VMIV…SVYD), 479-530 (SIYV…LING), 532-590 (MLIF…VING), and 591-637 (SMYI…WNKN). Residue asparagine 379 is glycosylated (N-linked (GlcNAc...) asparagine). 3 PSI domains span residues 613-656 (NCKA…AKCP), 665-708 (RCYR…TKCH), and 714-759 (ICNK…DACL). An N-linked (GlcNAc...) asparagine glycan is attached at asparagine 703. The C-type lectin domain maps to 754 to 872 (VGDACLRINS…TSMADGLVCE (119 aa)). Cysteine 775 and cysteine 871 are disulfide-bonded. Residues asparagine 777 and asparagine 897 are each glycosylated (N-linked (GlcNAc...) asparagine). PSI domains follow at residues 888–938 (PCSL…ATCS) and 941–1011 (NCSG…IQCP). 8 cysteine pairs are disulfide-bonded: cysteine 1013–cysteine 1021, cysteine 1015–cysteine 1027, cysteine 1030–cysteine 1039, cysteine 1042–cysteine 1056, cysteine 1059–cysteine 1068, cysteine 1061–cysteine 1075, cysteine 1077–cysteine 1087, and cysteine 1090–cysteine 1105. Laminin EGF-like domains lie at 1013 to 1058 (CQCN…QCTA) and 1059 to 1107 (CTCG…TCYY). Residue asparagine 1156 is glycosylated (N-linked (GlcNAc...) asparagine). Residues 1230-1250 (VQFFVTFFSCFLSLLLVAAVV) form a helical membrane-spanning segment. Over 1251-1378 (WKIKQTCWAS…HLSTRQGTCV (128 aa)) the chain is Cytoplasmic. The interaction with MC4R stretch occupies residues 1287–1324 (VGAEQTDFLRGPLEGAPKPIAIEPCAGNRAAVLTVFLC). Residues 1351 to 1378 (QQKPSDNKDKTSGVRNRKHLSTRQGTCV) are disordered.

As to quaternary structure, interacts with MC4R. In terms of tissue distribution, highly expressed in brain, heart, lung, kidney and liver. In the central nervous system, it is highly expressed in the dentate gyrus, CA1-3 regions of the hippocampus, and the ventral taenia tecta.

Its subcellular location is the cell membrane. May play a role in melanocortin signaling pathways that regulate energy homeostasis. This chain is Attractin-like protein 1 (Atrnl1), found in Mus musculus (Mouse).